The chain runs to 363 residues: Peptide chain release factor 2 (363 aa).

N5-methylglutamine is present on Gln251.

This sequence belongs to the prokaryotic/mitochondrial release factor family. Methylated by PrmC. Methylation increases the termination efficiency of RF2.

It localises to the cytoplasm. Its function is as follows. Peptide chain release factor 2 directs the termination of translation in response to the peptide chain termination codons UGA and UAA. This chain is Peptide chain release factor 2, found in Helicobacter pylori (strain Shi470).